The following is a 167-amino-acid chain: 3-isopropylmalate dehydratase small subunit (167 aa).

This sequence belongs to the LeuD family. LeuD type 2 subfamily. In terms of assembly, heterodimer of LeuC and LeuD.

It catalyses the reaction (2R,3S)-3-isopropylmalate = (2S)-2-isopropylmalate. The protein operates within amino-acid biosynthesis; L-leucine biosynthesis; L-leucine from 3-methyl-2-oxobutanoate: step 2/4. In terms of biological role, catalyzes the isomerization between 2-isopropylmalate and 3-isopropylmalate, via the formation of 2-isopropylmaleate. The sequence is that of 3-isopropylmalate dehydratase small subunit from Sulfurimonas denitrificans (strain ATCC 33889 / DSM 1251) (Thiomicrospira denitrificans (strain ATCC 33889 / DSM 1251)).